The following is a 342-amino-acid chain: GTPase Obg (342 aa).

The Obg domain occupies 1-159 (MQFIDRAEIE…RNLRLELKLL (159 aa)). One can recognise an OBG-type G domain in the interval 160-328 (AEVGIIGLPN…LLQAIWHRLD (169 aa)). Residues 166-173 (GLPNAGKS), 191-195 (FTTLV), 213-216 (DIPG), 280-283 (NKVD), and 309-311 (SAV) contribute to the GTP site. Positions 173 and 193 each coordinate Mg(2+).

This sequence belongs to the TRAFAC class OBG-HflX-like GTPase superfamily. OBG GTPase family. As to quaternary structure, monomer. Requires Mg(2+) as cofactor.

The protein resides in the cytoplasm. Functionally, an essential GTPase which binds GTP, GDP and possibly (p)ppGpp with moderate affinity, with high nucleotide exchange rates and a fairly low GTP hydrolysis rate. Plays a role in control of the cell cycle, stress response, ribosome biogenesis and in those bacteria that undergo differentiation, in morphogenesis control. The chain is GTPase Obg from Crocosphaera subtropica (strain ATCC 51142 / BH68) (Cyanothece sp. (strain ATCC 51142)).